Consider the following 243-residue polypeptide: uncharacterized protein (243 aa).

Residues 2–240 form the GP-PDE domain; it reads TKIFAHRGAS…DFPEKASALL (239 aa).

This is an uncharacterized protein from Bacillus subtilis (strain 168).